We begin with the raw amino-acid sequence, 191 residues long: Prostaglandin-H2 D-isomerase (191 aa).

An N-terminal signal peptide occupies residues 1-24 (MAALHTLWMGLVLLGVLGVLQTRA). At Gln-25 the chain carries Pyrrolidone carboxylic acid. The N-linked (GlcNAc...) asparagine glycan is linked to Asn-51. Catalysis depends on Cys-65, which acts as the Nucleophile. The N-linked (GlcNAc...) asparagine glycan is linked to Asn-78. The cysteines at positions 89 and 186 are disulfide-linked.

The protein belongs to the calycin superfamily. Lipocalin family. As to quaternary structure, monomer. In terms of processing, N- and O-glycosylated. Both N-glycosylation recognition sites are almost quantitatively occupied by N-glycans of the biantennary complex type, with a considerable proportion of structures bearing a bisecting GlcNAc. N-glycan at Asn-78: dHex1Hex5HexNAc4. Agalacto structure as well as sialylated and nonsialylated oligosaccharides bearing alpha2-3- and/or alpha2-6-linked NeuNAc are present.

It is found in the rough endoplasmic reticulum. The protein resides in the nucleus membrane. Its subcellular location is the golgi apparatus. It localises to the cytoplasm. The protein localises to the perinuclear region. It is found in the secreted. It catalyses the reaction prostaglandin H2 = prostaglandin D2. In terms of biological role, catalyzes the conversion of PGH2 to PGD2, a prostaglandin involved in smooth muscle contraction/relaxation and a potent inhibitor of platelet aggregation. Involved in a variety of CNS functions, such as sedation, NREM sleep and PGE2-induced allodynia, and may have an anti-apoptotic role in oligodendrocytes. Binds small non-substrate lipophilic molecules, including biliverdin, bilirubin, retinal, retinoic acid and thyroid hormone, and may act as a scavenger for harmful hydrophobic molecules and as a secretory retinoid and thyroid hormone transporter. Possibly involved in development and maintenance of the blood-brain, blood-retina, blood-aqueous humor and blood-testis barrier. It is likely to play important roles in both maturation and maintenance of the central nervous system and male reproductive system. Involved in PLA2G3-dependent maturation of mast cells. PLA2G3 is secreted by immature mast cells and acts on nearby fibroblasts upstream to PTDGS to synthesize PGD2, which in turn promotes mast cell maturation and degranulation via PTGDR. The sequence is that of Prostaglandin-H2 D-isomerase (PTGDS) from Felis catus (Cat).